A 499-amino-acid polypeptide reads, in one-letter code: Neuronal acetylcholine receptor subunit alpha-7 (499 aa).

The N-terminal stretch at 1–19 (MRGSLCLALAASILHVSLQ) is a signal peptide. Over 20–230 (GEFQRKLYKD…VSIRRRTLYY (211 aa)) the chain is Extracellular. Ca(2+) contacts are provided by Arg39 and Val41. 3 N-linked (GlcNAc...) asparagine glycosylation sites follow: Asn43, Asn87, and Asn130. Cys147 and Cys161 are disulfide-bonded. The Ca(2+) site is built by Ser169 and Tyr207. An intrachain disulfide couples Cys209 to Cys210. The next 3 membrane-spanning stretches (helical) occupy residues 231–251 (GLNL…VFLL), 259–279 (ISLG…VAEI), and 292–312 (QYFA…VIVL). Residues 257-264 (EKISLGIT) form an essential for TMEM35A/NACHO-mediated proper subunit assembly and trafficking to cell membrane region. At 313–466 (QYHHHDPDGG…WKFAACVVDR (154 aa)) the chain is on the cytoplasmic side. The helical transmembrane segment at 467–487 (LCLMAFSVFTILCTIGILMSA) threads the bilayer.

Belongs to the ligand-gated ion channel (TC 1.A.9) family. Acetylcholine receptor (TC 1.A.9.1) subfamily. Alpha-7/CHRNA7 sub-subfamily. As to quaternary structure, homopentamer. Homooligomer of the short form gives rise to unfunctional channels, as does coexpression of both long and short forms of the receptor. Can also form heteropentamers with CHRNB2, mainly found in basal forebrain cholinergic neurons. Interacts with RIC3; which is required for proper folding and assembly. Interacts with LYPD6. Interacts with CANX. Post-translationally, glycosylations at Asn-43, Asn-87 and Asn-130 are essential for TMEM35A/NACHO-mediated proper subunit assembly and trafficking to the cell membrane. As to expression, at least in chromaffin cells.

It is found in the postsynaptic cell membrane. The protein resides in the cell membrane. The enzyme catalyses Ca(2+)(in) = Ca(2+)(out). The catalysed reaction is K(+)(in) = K(+)(out). It carries out the reaction Na(+)(in) = Na(+)(out). It catalyses the reaction choline(out) = choline(in). The enzyme catalyses NH4(+)(in) = NH4(+)(out). The catalysed reaction is L-arginine(in) = L-arginine(out). It carries out the reaction guanidine(out) = guanidine(in). Activated by a myriad of ligands such as acetylcholine, cytisine, nicotine, choline and epibatidine. Oligomeric amyloid-beta protein 42 activates specifially CHRNA7:CHRNB2 nAchRs. Activity is modulated by positive allosteric modulators (PAMs), such as flavonoids, with a wide range of chemical diversity, pharmacological sensitivity and efficacy. AChR activity is inhibited by the antagonists alpha-conotoxons RgIA, ImI and ImII, small disulfide-constrained peptides from cone snails. Alpha-conotoxin PnIC selectively inhibits CHRNA7:CHRNB2 over CHRNA7 homopentamer. Component of neuronal acetylcholine receptors (nAChRs) that function as pentameric, ligand-gated cation channels with high calcium permeability among other activities. nAChRs are excitatory neurotrasnmitter receptors formed by a collection of nAChR subunits known to mediate synaptic transmission in the nervous system and the neuromuscular junction. Each nAchR subunit confers differential attributes to channel properties, including activation, deactivation and desensitization kinetics, pH sensitivity, cation permeability, and binding to allosteric modulators. CHRNA7 forms homopentameric neuronal acetylcholine receptors abundantly expressed in the central nervous system, characterized by fast desensitization and high calcium permeability. Also forms heteropentamers with CHRNB2, mainly expressed in basal forebrain cholinergic neurons. Involved in the modulation of calcium-dependent signaling pathways and influences the release of neurotransmitters, including dopamine, glutamate and GABA. Also expressed in non-neuronal cells such as immune cells like lymphocytes, monocytes and macrophages. In T cells, activation induces metabotropic signaling that results in an increase of intracellular Ca2+ concentrations, independent of ionotropic receptor functions. In macrophages, required for acetylcholine-mediated inhibition of TNF and other inflammatory cytokine release. Once activated by acetylcholine, nicotine or other agonists, selectively inhibits production of pro-inflammatory cytokines while leaving anti-inflammatory cytokines undisturbed. Stimulates the cholinergic anti-inflammatory pathway, controlling inflammation by inhibiting NFKB nuclear translocation and activating the JAK2-STAT3 pathway, independently of ion channel activity. Also expressed in the urothelium where it modulates reflex bladder activity by increasing intracellular calcium through internal stores and decreasing basal ATP release. The protein is Neuronal acetylcholine receptor subunit alpha-7 (CHRNA7) of Bos taurus (Bovine).